A 60-amino-acid polypeptide reads, in one-letter code: Metallothionein B (60 aa).

The beta stretch occupies residues 1 to 28; the sequence is MDPCECTKSGTCNCGGSCTCTNCSCTSC. A divalent metal cation contacts are provided by Cys4, Cys6, Cys12, Cys14, Cys18, Cys20, Cys23, Cys25, Cys28, Cys32, Cys33, Cys35, Cys36, Cys40, Cys43, Cys47, Cys49, Cys54, Cys58, and Cys59. An alpha region spans residues 29–60; it reads KKSCCPCCPSGCTKCASGCVCKGKTCDTSCCQ.

This sequence belongs to the metallothionein superfamily. Type 1 family.

Functionally, metallothioneins have a high content of cysteine residues that bind various heavy metals. The sequence is that of Metallothionein B (mtb) from Chaenocephalus aceratus (Blackfin icefish).